The sequence spans 350 residues: Anthranilate phosphoribosyltransferase (350 aa).

Residues Gly-93, 96–97, Thr-101, 103–106, 121–129, and Ser-133 each bind 5-phospho-alpha-D-ribose 1-diphosphate; these read GD, NIST, and KHGNRSASG. Gly-93 is an anthranilate binding site. Ser-105 is a Mg(2+) binding site. Position 124 (Asn-124) interacts with anthranilate. Anthranilate is bound at residue Arg-179. The Mg(2+) site is built by Asp-238 and Glu-239.

This sequence belongs to the anthranilate phosphoribosyltransferase family. Homodimer. It depends on Mg(2+) as a cofactor.

The enzyme catalyses N-(5-phospho-beta-D-ribosyl)anthranilate + diphosphate = 5-phospho-alpha-D-ribose 1-diphosphate + anthranilate. Its pathway is amino-acid biosynthesis; L-tryptophan biosynthesis; L-tryptophan from chorismate: step 2/5. Functionally, catalyzes the transfer of the phosphoribosyl group of 5-phosphorylribose-1-pyrophosphate (PRPP) to anthranilate to yield N-(5'-phosphoribosyl)-anthranilate (PRA). The chain is Anthranilate phosphoribosyltransferase from Parasynechococcus marenigrum (strain WH8102).